Reading from the N-terminus, the 2403-residue chain is Highly reducing polyketide synthase fogA (2403 aa).

In terms of domain architecture, Ketosynthase family 3 (KS3) spans 3-428 (DDPPCIVGMA…GANAHVILES (426 aa)). Catalysis depends on for beta-ketoacyl synthase activity residues Cys-176, His-311, and His-350. The tract at residues 538–858 (VFTGQGAQYA…PYAPSLVRKE (321 aa)) is malonyl-CoA:ACP transacylase (MAT) domain. Residue Ser-632 is the For malonyltransferase activity of the active site. Residues 929–1068 (HELLGTFALT…GSIRVVEPLT (140 aa)) form an N-terminal hotdog fold region. The dehydratase (DH) domain stretch occupies residues 929–1238 (HELLGTFALT…DARMSLYTGK (310 aa)). The 313-residue stretch at 929–1241 (HELLGTFALT…MSLYTGKSSA (313 aa)) folds into the PKS/mFAS DH domain. The active-site Proton acceptor; for dehydratase activity is the His-961. Residues 1084 to 1241 (SFEASPTNRW…MSLYTGKSSA (158 aa)) are C-terminal hotdog fold. The Proton donor; for dehydratase activity role is filled by Asp-1152. The segment at 1663–1981 (GATDSMFFQQ…QQDRIGKIVI (319 aa)) is enoyl reductase (ER) domain. Residues 2006–2185 (VYLLIGCLGG…AVAVGLGMIS (180 aa)) form a ketoreductase (KR) domain region. A disordered region spans residues 2280–2300 (AQNSTSSSGSNSNTPTTAAPW). Residues 2282-2296 (NSTSSSGSNSNTPTT) show a composition bias toward low complexity. The Carrier domain occupies 2320-2398 (SLNAAILRLI…GLAVVVEGKL (79 aa)). Ser-2357 bears the O-(pantetheine 4'-phosphoryl)serine mark.

Pantetheine 4'-phosphate serves as cofactor.

It participates in secondary metabolite biosynthesis. Highly reducing polyketide synthase; part of the gene cluster that mediates the biosynthesis of flavoglaucin and congeners (including aspergin, dihydroauroglaucin and auroglaucin), prenylated salicylaldehyde derivatives carrying a saturated or an unsaturated C-7 side chain. FogA releases the carboxylic acid (8E,10E,12E)-3,5,7-trihydroxytetradeca-8,10,12-trienoic acid as its product, as well as derivatives with one and two double bonds. FogA is indeed able to reduce the initial triketide, thus being at least partially responsible for the differently saturated heptyl side chains of flavoglaucin congeners. The oxidoreductases fogB, fogC and fogD modify the nascent polyketide in fogA-bound form and, together, fogA, fogB, fogC and fogD are necessary for the formation of the aromatic core and the cyclized PKS products are released as salicyl alcohols. In particular, fogB is responsible for oxidation of a hydroxyl group or reduction of remaining double bond(s) at the C-7 residue whereas fogD is probably involved in the reductive release of the modified PKS products. The cytochrome P450 monooxygenase fogE is then responsible for the hydroxylation at C-3 of the benzene ring. The fogE products are substrates of the prenyltransferase fogH and the prenylated benzyl alcohols are subsequently oxidized by the fogF to produce the final aryl aldehydes flavoglaucin and congeners. The short-chain dehydrogenase fogG does not seem to be involved in the biosynthesis of the prenylated salicylaldehyde derivatives. This chain is Highly reducing polyketide synthase fogA, found in Aspergillus ruber (strain CBS 135680).